The following is a 314-amino-acid chain: Olfactory receptor 5P62 (314 aa).

Residues 1–28 lie on the Extracellular side of the membrane; sequence MAFIYNGSQTTVTEFILLGLTDDPVLKV. Residue Asn-6 is glycosylated (N-linked (GlcNAc...) asparagine). A helical membrane pass occupies residues 29–49; that stretch reads ILFCIILCIYLVTVFGNLSTI. At 50 to 57 the chain is on the cytoplasmic side; it reads LLIGVSSK. A helical membrane pass occupies residues 58–78; that stretch reads LHHPMYFFLSHLASVDMGLSS. Residues 79–102 lie on the Extracellular side of the membrane; it reads SVTPNMLVNFLTEKNTISYLGCGI. Cys-100 and Cys-192 form a disulfide bridge. Residues 103 to 123 traverse the membrane as a helical segment; it reads QLSSAAFFGAVEFFLLAAMAY. Topologically, residues 124 to 136 are cytoplasmic; that stretch reads DRLVAICNPLLYS. Residues 137–157 traverse the membrane as a helical segment; it reads TKMSSQVCIQLVAGSYVGGFL. The Extracellular portion of the chain corresponds to 158–199; sequence NASFVTHFFFSFLFCGPNRVNHFFCDLSPMMELSCSDVSISE. Residues 200-220 form a helical membrane-spanning segment; it reads IVISFSAGSFTMTTLFVIVIP. At 221–240 the chain is on the cytoplasmic side; it reads YFYIFITILKIRSTEGRQKA. Residues 241–261 traverse the membrane as a helical segment; sequence FSTCTSHLTAVTLYYGTIIFI. The Extracellular segment spans residues 262 to 274; sequence YVMPKSTYSRDQN. A helical transmembrane segment spans residues 275-295; sequence KVVSLFYMLVIPVLNPLIYSL. The Cytoplasmic segment spans residues 296–314; sequence RNNEIKDALKRQFYRKTLL.

Belongs to the G-protein coupled receptor 1 family.

Its subcellular location is the cell membrane. In terms of biological role, potential odorant receptor. The chain is Olfactory receptor 5P62 from Mus musculus (Mouse).